Reading from the N-terminus, the 265-residue chain is tRNA pseudouridine synthase A (265 aa).

The active-site Nucleophile is the Asp-58. Tyr-116 contributes to the substrate binding site.

Belongs to the tRNA pseudouridine synthase TruA family. Homodimer.

It carries out the reaction uridine(38/39/40) in tRNA = pseudouridine(38/39/40) in tRNA. Its function is as follows. Formation of pseudouridine at positions 38, 39 and 40 in the anticodon stem and loop of transfer RNAs. The polypeptide is tRNA pseudouridine synthase A (Neisseria meningitidis serogroup C / serotype 2a (strain ATCC 700532 / DSM 15464 / FAM18)).